The sequence spans 113 residues: Small ribosomal subunit protein uS17 (113 aa).

Belongs to the universal ribosomal protein uS17 family. Part of the 30S ribosomal subunit.

One of the primary rRNA binding proteins, it binds specifically to the 5'-end of 16S ribosomal RNA. In Pyrococcus abyssi (strain GE5 / Orsay), this protein is Small ribosomal subunit protein uS17.